A 163-amino-acid polypeptide reads, in one-letter code: Putative phosphinothricin acetyltransferase YwnH (163 aa).

Positions 1–158 (MTLRLAEHRD…DGKRYDLKIL (158 aa)) constitute an N-acetyltransferase domain. Acetyl-CoA contacts are provided by residues 85 to 87 (IYI), 94 to 98 (KGVGS), and 124 to 126 (NKP).

Belongs to the acetyltransferase family. PAT/BAR subfamily.

It catalyses the reaction phosphinothricin + acetyl-CoA = N-acetylphosphinothricin + CoA + H(+). This enzyme is an effector of phosphinothricin tripeptide (PTT or bialaphos) resistance. Inactivates PTT by transfer of an acetyl group. The protein is Putative phosphinothricin acetyltransferase YwnH (ywnH) of Bacillus subtilis (strain 168).